We begin with the raw amino-acid sequence, 703 residues long: MAALAAGISKQRAAAQGLGSNQNAVKYLGQDFETLRKQCLNSGVLFKDPEFPACPSALGYRDLGPGSAETQGIIWKRPTELCSNPQFIVGGATRTDIRQGGLGDCWLLAAIASLTLNEKLLYRVVPRDQSFQKNYAGIFHFQFWQYGEWVEVVIDDRLPTKNGQLLFLHSEEGNEFWSALLEKAYAKLNGSYEALAGGSTIEGFEDFTGGISEFYDLRKPPGNLYYTIQKALRKGSLLGCSIDVSNAAEAEATTRQKLVKGHAYSVTGVEEVDFRGLPEKLIRLRNPWGEVEWTGAWSDSAPEWNYIDPQKKGELDKRAEDGEFWMSFSDFLKQFSRLEICNLSPDSLSSEEIHKWNLVLFNGRWTRGSTAGGCQNYPATYWTNPQFKIHLDEVDEDQEEGTSEPCCTVLLGLMQKNRRRQRRIGQGMLSIGYAVYQIPKELENHTDEHLGRDFFQGRQPSTCSSTYMNLREVSSRVQLPPGQYLVVPSTFEPFKDGDFCLRVFSEKKAQALEIGDAVPGDPHEPHPRDMDGEDEHFWSLSEEFADKDSEISAHQLKRVLNGLLSKRTDMKFDGFNINTCREMISLLDGDGTGSLRPVEFKTLWLKICKYLEIYQEMDHSRAGTIDAHEMRTALKKAGFTLNNQVQQTIATRYACSKLGVDFDGFVACMIRLEILFKLFRLLDKDQNGIVQLSLAEWLCRALV.

One can recognise a Calpain catalytic domain in the interval 45–344 (LFKDPEFPAC…FSRLEICNLS (300 aa)). Residues Cys105, His262, and Asn286 contribute to the active site. The tract at residues 355 to 512 (KWNLVLFNGR…VFSEKKAQAL (158 aa)) is domain III. A linker region spans residues 513-531 (EIGDAVPGDPHEPHPRDMD). 4 consecutive EF-hand domains span residues 531 to 566 (DGEDEHFWSLSEEFADKDSEISAHQLKRVLNGLLSK), 575 to 610 (FNINTCREMISLLDGDGTGSLRPVEFKTLWLKICKY), 605 to 640 (LKICKYLEIYQEMDHSRAGTIDAHEMRTALKKAGFT), and 670 to 703 (IRLEILFKLFRLLDKDQNGIVQLSLAEWLCRALV). The interval 532-703 (GEDEHFWSLS…LAEWLCRALV (172 aa)) is domain IV. Residues Asp588, Asp590, Thr592, Ser594, Glu599, Asp618, Ser620, Thr624, and Glu629 each coordinate Ca(2+).

This sequence belongs to the peptidase C2 family. As to quaternary structure, monomer and homooligomer. Interacts with COPS1/GPS1, COPB1, EYA2, NME2, NME4 and TOMM70. Requires Ca(2+) as cofactor. Undergoes autolytic cleavage between Ala-5 and Ala-6 which gives rise to fragments extending from Ala-6 to the C-terminus, Ala-6 to the EF-hand 2 domain and from Ala-6 to the beginning of domain III. Predominantly expressed in the stomach. Localizes strictly to the surface mucus cells in the gastric epithelium and the mucus-secreting goblet cells in the duodenum.

The protein localises to the cytoplasm. It localises to the golgi apparatus. It carries out the reaction Broad endopeptidase specificity.. Its activity is regulated as follows. The concentration of calcium for half-maximal activity is 0.3 mM. Inhibited by calpastatin and calpeptin. Functionally, calcium-regulated non-lysosomal thiol-protease. Involved in membrane trafficking in the gastric surface mucus cells (pit cells) and may involve the membrane trafficking of mucus cells via interactions with coat protein. Proteolytically cleaves the beta-subunit of coatomer complex. The chain is Calpain-8 (Capn8) from Mus musculus (Mouse).